The chain runs to 185 residues: Transcription termination/antitermination protein NusG (185 aa).

A KOW domain is found at 134 to 163 (VGQQVRIVEGPFATFSGEVEEVMSERNKVR).

The protein belongs to the NusG family.

Participates in transcription elongation, termination and antitermination. In Treponema pallidum (strain Nichols), this protein is Transcription termination/antitermination protein NusG.